Here is a 569-residue protein sequence, read N- to C-terminus: AP-4 complex accessory subunit Tepsin (569 aa).

In terms of domain architecture, ENTH spans 8 to 141 (RDRLSFLHRL…FSDALPQPPS (134 aa)). The tract at residues 196-298 (VRPGPDNPCT…SGASREPGDL (103 aa)) is disordered. Residues 219 to 229 (VTPSASHTHPN) show a composition bias toward polar residues. Residues 260–292 (SSPSSQNSSCTSNLSRASDSVSRSGSDSHSGAS) show a composition bias toward low complexity. Serine 400 carries the phosphoserine modification. Residues 467 to 524 (VPRSPVPTPSPDTLPPALQDPGELRTQLVCSSEPGTGSEQRLENTDTPKDSSSPCPWS) are disordered. A compositionally biased stretch (pro residues) spans 470–480 (SPVPTPSPDTL). Residues 494–505 (LVCSSEPGTGSE) show a composition bias toward polar residues. Positions 506–515 (QRLENTDTPK) are enriched in basic and acidic residues. The tract at residues 525 to 535 (PNSLFAGMELV) is interaction with AP4B1. Positions 559–569 (SEPSAFAFLNM) are interaction with AP4E1.

In terms of assembly, interacts with AP4B1 and AP4E1; the interaction is direct and mediates the association of TEPSIN with the adapter-like complex 4 (AP-4), a heterotetramer composed of AP4B1, AP4E1, AP4M1 and AP4S1.

The protein localises to the golgi apparatus. It localises to the trans-Golgi network membrane. Its subcellular location is the cytoplasmic vesicle. It is found in the cytoplasm. The protein resides in the cytosol. In terms of biological role, associates with the adapter-like complex 4 (AP-4) and may therefore play a role in vesicular trafficking of proteins at the trans-Golgi network. The polypeptide is AP-4 complex accessory subunit Tepsin (Rattus norvegicus (Rat)).